The chain runs to 113 residues: U11-theraphotoxin-Hhn1h (113 aa).

A signal peptide spans 1-21 (MNTVRVTFLLVFVLVVSLGQA). Positions 22–74 (DKDENRMEMQEKTEQGKSYLDFAENLLLQKLEELEAKLLEEDSEESRNSRQKR) are excised as a propeptide. Residues 61-83 (EEDSEESRNSRQKRRIGEGVPCD) are disordered. 2 disulfides stabilise this stretch: C82–C95 and C89–C110.

Belongs to the neurotoxin 14 (magi-1) family. 01 (HNTX-16) subfamily. Expressed by the venom gland.

Its subcellular location is the secreted. Probable ion channel inhibitor. This is U11-theraphotoxin-Hhn1h from Cyriopagopus hainanus (Chinese bird spider).